The chain runs to 143 residues: Large ribosomal subunit protein uL11 (143 aa).

This sequence belongs to the universal ribosomal protein uL11 family. As to quaternary structure, part of the ribosomal stalk of the 50S ribosomal subunit. Interacts with L10 and the large rRNA to form the base of the stalk. L10 forms an elongated spine to which L12 dimers bind in a sequential fashion forming a multimeric L10(L12)X complex. Post-translationally, one or more lysine residues are methylated.

In terms of biological role, forms part of the ribosomal stalk which helps the ribosome interact with GTP-bound translation factors. This is Large ribosomal subunit protein uL11 from Pseudomonas entomophila (strain L48).